The primary structure comprises 322 residues: Ribose 1,5-bisphosphate isomerase (322 aa).

Residues 20-23 (RGAG) and Arg-63 each bind substrate. Cys-133 serves as the catalytic Proton acceptor. Position 135 to 137 (135 to 137 (SKA)) interacts with substrate. The Proton donor role is filled by Asp-202. Substrate contacts are provided by residues 212-213 (NK) and Lys-238.

The protein belongs to the eIF-2B alpha/beta/delta subunits family. R15P isomerase subfamily. In terms of assembly, homohexamer; trimer of dimers.

The enzyme catalyses alpha-D-ribose 1,5-bisphosphate = D-ribulose 1,5-bisphosphate. Is highly activated in the presence of AMP, with an increase of &gt;40-fold in activity levels. Among other nucleotides, isomerase activity is slightly increased in the presence of GMP, but CMP, UMP, TMP, and NAD(+) have no effect; therefore, AMP is likely the major activator of R15P isomerase in vivo. To a lesser extent, various compounds with an adenosyl moiety, such as dAMP, adenosine, or methylthioadenosine, can also act as activators. The regulation of this enzyme by AMP prevents excess degradation of intracellular AMP by the archaeal AMP degradation pathway. Functionally, catalyzes the isomerization of ribose 1,5-bisphosphate (R15P) to ribulose 1,5-bisphosphate (RuBP), the CO(2) acceptor and substrate for RubisCO. Only accepts the alpha-anomer of D-ribose 1,5-bisphosphate as substrate, being inactive on the beta-anomer. Displays a strict substrate specificity, since other phosphorylated sugars such as R5P, ribose, G16P, G6P, G1P, FBP, F6P, and PRPP, are not substrates. Functions in an archaeal AMP degradation pathway, together with AMP phosphorylase and RubisCO. The protein is Ribose 1,5-bisphosphate isomerase of Thermococcus kodakarensis (strain ATCC BAA-918 / JCM 12380 / KOD1) (Pyrococcus kodakaraensis (strain KOD1)).